Reading from the N-terminus, the 230-residue chain is UPF0173 metal-dependent hydrolase RSKD131_0588 (230 aa).

The protein belongs to the UPF0173 family.

The chain is UPF0173 metal-dependent hydrolase RSKD131_0588 from Cereibacter sphaeroides (strain KD131 / KCTC 12085) (Rhodobacter sphaeroides).